Reading from the N-terminus, the 875-residue chain is Ectonucleotide pyrophosphatase/phosphodiesterase family member 3 (875 aa).

Over 1-11 (MDSRLALATEE) the chain is Cytoplasmic. Residues 12-30 (PIKKDSLKRYKILCAVLLA) form a helical; Signal-anchor for type II membrane protein membrane-spanning segment. The Extracellular portion of the chain corresponds to 31 to 875 (LLVIVSLGLG…TYLPTFETII (845 aa)). SMB domains are found at residues 51–94 (HIGS…VKST) and 95–139 (QIWT…GEVP). 10 cysteine pairs are disulfide-bonded: Cys55–Cys72, Cys59–Cys90, Cys70–Cys83, Cys76–Cys82, Cys99–Cys116, Cys104–Cys134, Cys114–Cys127, Cys120–Cys126, Cys145–Cys191, and Cys153–Cys365. The Cell attachment site signature appears at 79-81 (RGD). Residues 161–545 (PVILFSMDGF…HGSLNHLLKA (385 aa)) are phosphodiesterase. Residue Asp168 participates in Zn(2+) binding. Lys205 lines the ATP pocket. Thr206 provides a ligand contact to Zn(2+). Thr206 functions as the Nucleophile in the catalytic mechanism. Asn227 contacts ATP. N-linked (GlcNAc...) asparagine glycosylation is present at Asn237. An ATP-binding site is contributed by Asp276. Residues Asn280 and Asn289 are each glycosylated (N-linked (GlcNAc...) asparagine). Tyr290 serves as a coordination point for ATP. Zn(2+) is bound by residues Asp326, His330, Asp373, and His374. Intrachain disulfides connect Cys381-Cys478, Cys429-Cys818, Cys562-Cys623, Cys575-Cys679, Cys577-Cys664, and Cys787-Cys797. Zn(2+) is bound at residue His483. N-linked (GlcNAc...) asparagine glycosylation is found at Asn533, Asn574, Asn594, and Asn702. The segment at 582 to 875 (TSGQEEQVNQ…TYLPTFETII (294 aa)) is nuclease. Ca(2+) contacts are provided by Asp752, Asn754, Asp756, His758, and Asp760. A glycan (N-linked (GlcNAc...) asparagine) is linked at Asn789.

Belongs to the nucleotide pyrophosphatase/phosphodiesterase family. As to quaternary structure, monomer and homodimer. The cofactor is Zn(2+). The N-terminal is blocked. In terms of processing, N-glycosylated. N-glycosylation is necessary for normal transport to the cell membrane, but is not the apical targeting signal. As to expression, detected in intestinal epithelium and liver (at protein level).

The protein resides in the cell membrane. It is found in the apical cell membrane. Its subcellular location is the secreted. The catalysed reaction is Hydrolytically removes 5'-nucleotides successively from the 3'-hydroxy termini of 3'-hydroxy-terminated oligonucleotides.. The enzyme catalyses a ribonucleoside 5'-triphosphate + H2O = a ribonucleoside 5'-phosphate + diphosphate + H(+). It carries out the reaction ATP + H2O = AMP + diphosphate + H(+). It catalyses the reaction CTP + H2O = CMP + diphosphate + H(+). The catalysed reaction is GTP + H2O = GMP + diphosphate + H(+). The enzyme catalyses UTP + H2O = UMP + diphosphate + H(+). It carries out the reaction UDP-N-acetyl-alpha-D-glucosamine + H2O = N-acetyl-alpha-D-glucosamine 1-phosphate + UMP + 2 H(+). It catalyses the reaction P(1),P(3)-bis(5'-adenosyl) triphosphate + H2O = AMP + ADP + 2 H(+). The catalysed reaction is P(1),P(4)-bis(5'-adenosyl) tetraphosphate + H2O = AMP + ATP + 2 H(+). The enzyme catalyses P(1),P(5)-bis(5'-adenosyl) pentaphosphate + H2O = adenosine 5'-tetraphosphate + AMP + 2 H(+). It carries out the reaction P(1),P(4)-bis(5'-guanosyl) tetraphosphate + H2O = GMP + GTP + 2 H(+). Functionally, hydrolase that metabolizes extracellular nucleotides, including ATP, GTP, UTP and CTP. Limits mast cells and basophils response during inflammation and during the chronic phases of allergic responses by eliminating extracellular ATP, a signaling molecule activating these cells in an autocrine manner. Metabolizes extracellular ATP in the lumen of the small intestine, and thereby prevents ATP-induced apoptosis of intestinal plasmacytoid dendritic cells. Has a broad specificity and can also hydrolyze UDP-GlcNAc into UMP and GlcNAc-1-phosphate and potentially several other intracellular nucleotide sugars, including UDP-GalNAc, CMP-NeuAc, GDP-Fuc, and UDP-GlcA. Thereby, could modulate glycan biosynthesis and protein glycosylation. Can hydrolyze extracellular dinucleoside polyphosphates, including the vasoactive adenosine polyphosphates as well. In addition, displays an alkaline phosphodiesterase activity in vitro. This is Ectonucleotide pyrophosphatase/phosphodiesterase family member 3 from Rattus norvegicus (Rat).